A 610-amino-acid polypeptide reads, in one-letter code: Dopamine beta-hydroxylase (610 aa).

Topologically, residues 1–9 (MKVPSPSVR) are cytoplasmic. Residues 10–30 (EAASMYGTAVAIFLVILVAAL) traverse the membrane as a helical; Signal-anchor for type II membrane protein segment. Residues 31 to 610 (QGSEPPESPF…TVVDIGGGKG (580 aa)) lie on the Intragranular side of the membrane. Positions 50 to 166 (GTLELSWNVS…GTVHLVYGIL (117 aa)) constitute a DOMON domain. 3 N-linked (GlcNAc...) asparagine glycosylation sites follow: N57, N177, and N194. Disulfide bonds link C147-C589, C225-C276, C262-C288, C383-C496, C387-C558, and C459-C481. Y223 is an active-site residue. Cu(2+) is bound by residues H255 and H256. The Cu(2+) site is built by H326, H405, H407, and M480. H405 is an active-site residue. Positions 586–610 (TPRCPASRGRSPAGPTVVDIGGGKG) are disordered.

Belongs to the copper type II ascorbate-dependent monooxygenase family. In terms of assembly, homotetramer; composed of two disulfide-linked dimers. Requires Cu(2+) as cofactor. Post-translationally, proteolytic cleavage after the membrane-anchor leads to the release of the soluble form. In terms of processing, N-glycosylated. Detected in adrenal medulla chromaffin cells.

It is found in the cytoplasmic vesicle. The protein localises to the secretory vesicle lumen. The protein resides in the secretory vesicle. Its subcellular location is the chromaffin granule lumen. It localises to the secreted. It is found in the secretory vesicle membrane. The protein localises to the chromaffin granule membrane. It catalyses the reaction dopamine + 2 L-ascorbate + O2 = (R)-noradrenaline + 2 monodehydro-L-ascorbate radical + H2O. It functions in the pathway catecholamine biosynthesis; (R)-noradrenaline biosynthesis; (R)-noradrenaline from dopamine: step 1/1. Catalyzes the hydroxylation of dopamine to noradrenaline (also known as norepinephrine), and is thus vital for regulation of these neurotransmitters. The sequence is that of Dopamine beta-hydroxylase (DBH) from Equus caballus (Horse).